The chain runs to 346 residues: Annexin A1 (346 aa).

At Ser-5 the chain carries Phosphoserine; by TRPM7. Gln-19 participates in a covalent cross-link: Isoglutamyl lysine isopeptide (Gln-Lys) (interchain with K-?). A Phosphotyrosine; by EGFR modification is found at Tyr-21. 2 positions are modified to phosphoserine: Ser-34 and Ser-37. 4 Annexin repeats span residues 42-113, 114-185, 197-269, and 273-344; these read FNPS…ALLK, TPAR…SLAK, DLAD…AIVK, and SKPM…ALCG. An N6-acetyllysine modification is found at Lys-58. Gly-59, Val-60, Glu-62, Lys-97, Leu-100, Glu-105, Met-127, Gly-129, Gly-131, Thr-132, and Glu-134 together coordinate Ca(2+). A Phosphothreonine modification is found at Thr-136. Positions 171, 210, and 213 each coordinate Ca(2+). A Glycyl lysine isopeptide (Lys-Gly) (interchain with G-Cter in SUMO1); alternate cross-link involves residue Lys-214. Lys-214 participates in a covalent cross-link: Glycyl lysine isopeptide (Lys-Gly) (interchain with G-Cter in SUMO2); alternate. Ca(2+) contacts are provided by Gly-215, Asp-253, Glu-255, and Met-256. A Glycyl lysine isopeptide (Lys-Gly) (interchain with G-Cter in SUMO1) cross-link involves residue Lys-257. Residues Glu-261, Met-286, Gly-288, and Gly-290 each coordinate Ca(2+). Lys-312 bears the N6-acetyllysine mark. Cys-324 and Cys-343 are disulfide-bonded. Ca(2+)-binding residues include Leu-328, Glu-330, and Thr-331. Lys-332 participates in a covalent cross-link: Glycyl lysine isopeptide (Lys-Gly) (interchain with G-Cter in SUMO1). Glu-336 is a binding site for Ca(2+).

Belongs to the annexin family. In terms of assembly, homodimer; non-covalently linked. Homodimer; linked by transglutamylation. Homodimers linked by transglutamylation are observed in placenta, but not in other tissues. Interacts with S100A11. Heterotetramer, formed by two molecules each of S100A11 and ANXA1. Interacts with DYSF. Interacts with EGFR. In terms of processing, phosphorylated by protein kinase C, EGFR and TRPM7. Phosphorylated in response to EGF treatment. Post-translationally, sumoylated. Proteolytically cleaved by cathepsin CTSG to release the active N-terminal peptide Ac2-26.

It localises to the nucleus. The protein resides in the cytoplasm. The protein localises to the cell projection. Its subcellular location is the cilium. It is found in the basolateral cell membrane. It localises to the lateral cell membrane. The protein resides in the cell membrane. The protein localises to the apical cell membrane. Its subcellular location is the membrane. It is found in the early endosome. It localises to the cytoplasmic vesicle membrane. The protein resides in the endosome membrane. The protein localises to the secreted. Its subcellular location is the extracellular space. It is found in the extracellular exosome. It localises to the cytoplasmic vesicle. The protein resides in the secretory vesicle lumen. The protein localises to the phagocytic cup. Functionally, plays important roles in the innate immune response as effector of glucocorticoid-mediated responses and regulator of the inflammatory process. Has anti-inflammatory activity. Plays a role in glucocorticoid-mediated down-regulation of the early phase of the inflammatory response. Contributes to the adaptive immune response by enhancing signaling cascades that are triggered by T-cell activation, regulates differentiation and proliferation of activated T-cells. Promotes the differentiation of T-cells into Th1 cells and negatively regulates differentiation into Th2 cells. Has no effect on unstimulated T-cells. Negatively regulates hormone exocytosis via activation of the formyl peptide receptors and reorganization of the actin cytoskeleton. Has high affinity for Ca(2+) and can bind up to eight Ca(2+) ions. Displays Ca(2+)-dependent binding to phospholipid membranes. Plays a role in the formation of phagocytic cups and phagosomes. Plays a role in phagocytosis by mediating the Ca(2+)-dependent interaction between phagosomes and the actin cytoskeleton. Functions at least in part by activating the formyl peptide receptors and downstream signaling cascades. Promotes chemotaxis of granulocytes and monocytes via activation of the formyl peptide receptors. Promotes rearrangement of the actin cytoskeleton, cell polarization and cell migration. Promotes resolution of inflammation and wound healing. Acts via neutrophil N-formyl peptide receptors to enhance the release of CXCL2. This chain is Annexin A1 (ANXA1), found in Equus caballus (Horse).